Consider the following 2491-residue polypeptide: Cation-independent mannose-6-phosphate receptor (2491 aa).

The signal sequence occupies residues 1-40 (MGAAAGRSPHLGPAPARRPQRSLLLLQLLLLVAAPGSTQA). At 41–2304 (QAAPFPELCS…MHKGLSERSQ (2264 aa)) the chain is on the lumenal side. MRH domains lie at 47–163 (ELCS…ACKK), 172–320 (VPCY…ACHR), 326–468 (KTCS…ACVK), 473–619 (LLCG…ACVL), 625–762 (ENCT…ACPE), 765–924 (LECV…ACPI), 932–1079 (QACS…ACVP), 1082–1219 (VDCQ…ACPV), 1225–1363 (DNCE…ACPP), 1367–1508 (TECS…ACPM), 1514–1648 (DDCQ…ACEQ), and 1650–1797 (TECS…VCPD). Disulfide bonds link cysteine 49–cysteine 69 and cysteine 77–cysteine 84. Asparagine 112 is a glycosylation site (N-linked (GlcNAc...) asparagine). Intrachain disulfides connect cysteine 117–cysteine 149, cysteine 134–cysteine 161, cysteine 174–cysteine 212, cysteine 228–cysteine 235, cysteine 275–cysteine 306, cysteine 288–cysteine 318, cysteine 328–cysteine 366, and cysteine 374–cysteine 382. N-linked (GlcNAc...) asparagine glycosylation is found at asparagine 400 and asparagine 435. 4 disulfides stabilise this stretch: cysteine 420-cysteine 454, cysteine 434-cysteine 466, cysteine 475-cysteine 519, and cysteine 531-cysteine 538. N-linked (GlcNAc...) asparagine glycosylation is found at asparagine 543 and asparagine 581. Intrachain disulfides connect cysteine 572–cysteine 605 and cysteine 586–cysteine 617. An N-linked (GlcNAc...) asparagine glycan is attached at asparagine 626. 5 cysteine pairs are disulfide-bonded: cysteine 627–cysteine 664, cysteine 672–cysteine 679, cysteine 731–cysteine 760, cysteine 767–cysteine 814, and cysteine 823–cysteine 830. A glycan (N-linked (GlcNAc...) asparagine) is linked at asparagine 747. The N-linked (GlcNAc...) asparagine glycan is linked to asparagine 871. 7 disulfides stabilise this stretch: cysteine 875/cysteine 910, cysteine 893/cysteine 922, cysteine 934/cysteine 970, cysteine 976/cysteine 987, cysteine 1042/cysteine 1077, cysteine 1084/cysteine 1125, and cysteine 1134/cysteine 1142. Asparagine 951 and asparagine 957 each carry an N-linked (GlcNAc...) asparagine glycan. A glycan (N-linked (GlcNAc...) asparagine) is linked at asparagine 1164. Disulfide bonds link cysteine 1177/cysteine 1205, cysteine 1190/cysteine 1217, cysteine 1227/cysteine 1262, and cysteine 1270/cysteine 1282. The N-linked (GlcNAc...) asparagine glycan is linked to asparagine 1246. An N-linked (GlcNAc...) asparagine glycan is attached at asparagine 1312. 24 cysteine pairs are disulfide-bonded: cysteine 1319–cysteine 1349, cysteine 1333–cysteine 1361, cysteine 1369–cysteine 1408, cysteine 1420–cysteine 1427, cysteine 1461–cysteine 1494, cysteine 1476–cysteine 1506, cysteine 1516–cysteine 1553, cysteine 1559–cysteine 1566, cysteine 1598–cysteine 1634, cysteine 1614–cysteine 1646, cysteine 1652–cysteine 1695, cysteine 1706–cysteine 1713, cysteine 1750–cysteine 1783, cysteine 1766–cysteine 1795, cysteine 1804–cysteine 1839, cysteine 1850–cysteine 1856, cysteine 1893–cysteine 1975, cysteine 1903–cysteine 1927, cysteine 1917–cysteine 1942, cysteine 1957–cysteine 1987, cysteine 1994–cysteine 2029, cysteine 2039–cysteine 2046, cysteine 2082–cysteine 2113, and cysteine 2096–cysteine 2125. An N-linked (GlcNAc...) asparagine glycan is attached at asparagine 1656. N-linked (GlcNAc...) asparagine glycosylation occurs at asparagine 1757. In terms of domain architecture, Fibronectin type-II spans 1802-1989 (DGCTLTDEQL…EWKTKVVCPP (188 aa)). N-linked (GlcNAc...) asparagine glycosylation occurs at asparagine 1816. MRH domains are found at residues 1992–2127 (LECK…ACAV) and 2135–2280 (VNGT…VCPL). A glycan (N-linked (GlcNAc...) asparagine) is linked at asparagine 2085. An N-linked (GlcNAc...) asparagine glycan is attached at asparagine 2136. 3 cysteine pairs are disulfide-bonded: cysteine 2188/cysteine 2194, cysteine 2232/cysteine 2266, and cysteine 2248/cysteine 2278. The helical transmembrane segment at 2305-2327 (AVGAVLSLLLVALTCCLLALLLY) threads the bilayer. Topologically, residues 2328–2491 (KKERRETVIS…DDSDEDLLHI (164 aa)) are cytoplasmic. At lysine 2352 the chain carries N6-acetyllysine. A Phosphoserine modification is found at serine 2409. The segment at 2424–2491 (GRGAGAESSH…DDSDEDLLHI (68 aa)) is disordered. An Omega-N-methylarginine modification is found at arginine 2425. The segment covering 2444-2459 (QEREDDRVGLVRGEKA) has biased composition (basic and acidic residues). Residues 2464–2477 (SSSAQQKTVSSTKL) show a composition bias toward polar residues. Residues serine 2479 and serine 2484 each carry the phosphoserine modification. Positions 2479 to 2491 (SFHDDSDEDLLHI) are enriched in basic and acidic residues.

This sequence belongs to the MRL1/IGF2R family. In terms of assembly, binds HA-I and HA-II plasma membrane adapters. Interacts with DPP4; the interaction is direct. Binds GGA1, GGA2 and GGA3. Interacts with the heterotrimeric retromer cargo-selective complex (CSC), formed by VPS26 (VPS26A or VPS26B), VPS29 and VPS35; which is involved in retrograde trafficking of the receptor from endosomes to the Golgi apparatus. Palmitoylated. Undergoes cysteine S-palmitoylation which promotes interaction with the retromer cargo-selective complex which mediates its retrograde trafficking to the Golgi apparatus.

The protein localises to the golgi apparatus membrane. The protein resides in the endosome membrane. Functionally, mediates the transport of phosphorylated lysosomal enzymes from the Golgi complex and the cell surface to lysosomes. Lysosomal enzymes bearing phosphomannosyl residues bind specifically to mannose-6-phosphate receptors in the Golgi apparatus and the resulting receptor-ligand complex is transported to an acidic prelysosomal compartment where the low pH mediates the dissociation of the complex. The receptor is then recycled back to the Golgi for another round of trafficking through its binding to the retromer. This receptor also binds IGF2. Acts as a positive regulator of T-cell coactivation by binding DPP4. This chain is Cation-independent mannose-6-phosphate receptor (IGF2R), found in Homo sapiens (Human).